A 245-amino-acid polypeptide reads, in one-letter code: tRNA pseudouridine synthase A (245 aa).

The Nucleophile role is filled by aspartate 52. A substrate-binding site is contributed by tyrosine 112.

This sequence belongs to the tRNA pseudouridine synthase TruA family. Homodimer.

The enzyme catalyses uridine(38/39/40) in tRNA = pseudouridine(38/39/40) in tRNA. Its function is as follows. Formation of pseudouridine at positions 38, 39 and 40 in the anticodon stem and loop of transfer RNAs. The protein is tRNA pseudouridine synthase A of Dictyoglomus turgidum (strain DSM 6724 / Z-1310).